A 219-amino-acid polypeptide reads, in one-letter code: Uracil-DNA glycosylase (219 aa).

Aspartate 62 acts as the Proton acceptor in catalysis.

Belongs to the uracil-DNA glycosylase (UDG) superfamily. UNG family.

It is found in the cytoplasm. The catalysed reaction is Hydrolyzes single-stranded DNA or mismatched double-stranded DNA and polynucleotides, releasing free uracil.. In terms of biological role, excises uracil residues from the DNA which can arise as a result of misincorporation of dUMP residues by DNA polymerase or due to deamination of cytosine. This chain is Uracil-DNA glycosylase, found in Lactococcus lactis subsp. cremoris (strain MG1363).